Reading from the N-terminus, the 115-residue chain is U3-lycotoxin-Ls1k (115 aa).

The signal sequence occupies residues 1–20 (MKFELLFGVLLVTLFSYSSA). The propeptide occupies 21-44 (EMLDDFDQADEDELLSLIEKEEAR). Intrachain disulfides connect Cys-48–Cys-63, Cys-55–Cys-72, Cys-62–Cys-87, and Cys-74–Cys-85.

Belongs to the neurotoxin 19 (CSTX) family. 01 subfamily. In terms of tissue distribution, expressed by the venom gland.

It is found in the secreted. This is U3-lycotoxin-Ls1k from Lycosa singoriensis (Wolf spider).